The sequence spans 558 residues: Adenine deaminase (558 aa).

It belongs to the metallo-dependent hydrolases superfamily. Adenine deaminase family. Mn(2+) serves as cofactor.

It carries out the reaction adenine + H2O + H(+) = hypoxanthine + NH4(+). The sequence is that of Adenine deaminase from Deinococcus deserti (strain DSM 17065 / CIP 109153 / LMG 22923 / VCD115).